Here is a 174-residue protein sequence, read N- to C-terminus: Flavodoxin (174 aa).

Residues 4–166 (IGIFFGSDTG…RIIQWTKKIK (163 aa)) form the Flavodoxin-like domain.

This sequence belongs to the flavodoxin family. Requires FMN as cofactor.

Its function is as follows. Low-potential electron donor to a number of redox enzymes. This is Flavodoxin (fldA) from Buchnera aphidicola subsp. Baizongia pistaciae (strain Bp).